Consider the following 314-residue polypeptide: Ferric-anguibactin transport system permease protein FatD (314 aa).

10 consecutive transmembrane segments (helical) span residues 1–21 (MTFR…FFGA), 49–69 (VALI…QHIV), 76–96 (PGTT…IVML), 103–123 (ERMF…IAII), 132–152 (ALVP…AEFY), 180–200 (IIFL…RFTV), 207–226 (IASN…LILV), 230–252 (VAVT…NLVA), 265–285 (IVAL…RVVL), and 288–308 (FEVP…LAFL).

This sequence belongs to the binding-protein-dependent transport system permease family. FecCD subfamily. As to quaternary structure, part of an iron transport system composed of the outer membrane receptor FatA, the periplasmic binding protein FatB and the inner membrane proteins FatC and FatD.

Its subcellular location is the cell inner membrane. Its function is as follows. Involved in the uptake of iron in complex with the siderophore anguibactin. Responsible for the translocation of ferric-anguibactin across the cytoplasmic membrane. The polypeptide is Ferric-anguibactin transport system permease protein FatD (Vibrio anguillarum (strain ATCC 68554 / 775) (Listonella anguillarum)).